The chain runs to 88 residues: MSLLDYFRSTKKPNTASLAKERLQIIVAHQRSGRGGGAPEYLPKMKQEIIEVIRKYVQISEDQVSVQLDQNDDNLSVLELNVTLPDTK.

It belongs to the MinE family.

Its function is as follows. Prevents the cell division inhibition by proteins MinC and MinD at internal division sites while permitting inhibition at polar sites. This ensures cell division at the proper site by restricting the formation of a division septum at the midpoint of the long axis of the cell. This chain is Cell division topological specificity factor, found in Shewanella denitrificans (strain OS217 / ATCC BAA-1090 / DSM 15013).